A 354-amino-acid chain; its full sequence is Protein RecA (354 aa).

67-74 contacts ATP; the sequence is GPESSGKT. Positions 331–354 are disordered; the sequence is GGANSSDSKTESDENIDLETGEVF. A compositionally biased stretch (acidic residues) spans 343–354; the sequence is DENIDLETGEVF.

It belongs to the RecA family.

The protein localises to the cytoplasm. Functionally, can catalyze the hydrolysis of ATP in the presence of single-stranded DNA, the ATP-dependent uptake of single-stranded DNA by duplex DNA, and the ATP-dependent hybridization of homologous single-stranded DNAs. It interacts with LexA causing its activation and leading to its autocatalytic cleavage. This is Protein RecA from Shewanella frigidimarina (strain NCIMB 400).